The sequence spans 246 residues: Flagellar L-ring protein (246 aa).

Positions 1 to 20 (MMQKCLSPKTLIAALVVLSA) are cleaved as a signal peptide. The N-palmitoyl cysteine moiety is linked to residue cysteine 21. Cysteine 21 carries S-diacylglycerol cysteine lipidation.

Belongs to the FlgH family. In terms of assembly, the basal body constitutes a major portion of the flagellar organelle and consists of four rings (L,P,S, and M) mounted on a central rod.

It is found in the cell outer membrane. It localises to the bacterial flagellum basal body. Assembles around the rod to form the L-ring and probably protects the motor/basal body from shearing forces during rotation. This is Flagellar L-ring protein from Ruegeria pomeroyi (strain ATCC 700808 / DSM 15171 / DSS-3) (Silicibacter pomeroyi).